We begin with the raw amino-acid sequence, 934 residues long: Leucine--tRNA ligase 1 (934 aa).

Positions 41-51 match the 'HIGH' region motif; sequence PYTNSPMHVGH. The 'KMSKS' region motif lies at 616 to 620; sequence KMSKS. Position 619 (Lys619) interacts with ATP.

It belongs to the class-I aminoacyl-tRNA synthetase family.

It localises to the cytoplasm. It carries out the reaction tRNA(Leu) + L-leucine + ATP = L-leucyl-tRNA(Leu) + AMP + diphosphate. This chain is Leucine--tRNA ligase 1, found in Saccharolobus solfataricus (strain ATCC 35092 / DSM 1617 / JCM 11322 / P2) (Sulfolobus solfataricus).